Consider the following 195-residue polypeptide: Flagellar transcriptional regulator FlhC (195 aa).

Positions 137, 140, 157, and 160 each coordinate Zn(2+). Residues 165 to 195 (RAGSARRKTTTRKAVAPTHKTTAASRKAVVA) form a disordered region.

Belongs to the FlhC family. In terms of assembly, heterohexamer composed of two FlhC and four FlhD subunits. Each FlhC binds a FlhD dimer, forming a heterotrimer, and a hexamer assembles by dimerization of two heterotrimers. Requires Zn(2+) as cofactor.

The protein localises to the cytoplasm. In terms of biological role, functions in complex with FlhD as a master transcriptional regulator that regulates transcription of several flagellar and non-flagellar operons by binding to their promoter region. Activates expression of class 2 flagellar genes, including fliA, which is a flagellum-specific sigma factor that turns on the class 3 genes. Also regulates genes whose products function in a variety of physiological pathways. The polypeptide is Flagellar transcriptional regulator FlhC (Thauera aminoaromatica).